The following is a 95-amino-acid chain: Cell division topological specificity factor (95 aa).

Belongs to the MinE family.

Its function is as follows. Prevents the cell division inhibition by proteins MinC and MinD at internal division sites while permitting inhibition at polar sites. This ensures cell division at the proper site by restricting the formation of a division septum at the midpoint of the long axis of the cell. The polypeptide is Cell division topological specificity factor (Psychrobacter cryohalolentis (strain ATCC BAA-1226 / DSM 17306 / VKM B-2378 / K5)).